The primary structure comprises 644 residues: UvrABC system protein C (644 aa).

The GIY-YIG domain maps to 47-125 (ARPGVYRMLD…IKRYRPPYNV (79 aa)). Positions 235-270 (TAVQKRLGEAMTRAADAMDFEQAAVLRDRLKALTFI) constitute a UVR domain.

This sequence belongs to the UvrC family. In terms of assembly, interacts with UvrB in an incision complex.

The protein localises to the cytoplasm. Functionally, the UvrABC repair system catalyzes the recognition and processing of DNA lesions. UvrC both incises the 5' and 3' sides of the lesion. The N-terminal half is responsible for the 3' incision and the C-terminal half is responsible for the 5' incision. This is UvrABC system protein C from Sphingopyxis alaskensis (strain DSM 13593 / LMG 18877 / RB2256) (Sphingomonas alaskensis).